The primary structure comprises 67 residues: Large ribosomal subunit protein bL35 (67 aa).

Belongs to the bacterial ribosomal protein bL35 family.

This is Large ribosomal subunit protein bL35 from Methylorubrum extorquens (strain CM4 / NCIMB 13688) (Methylobacterium extorquens).